The primary structure comprises 156 residues: Ribosomal RNA large subunit methyltransferase H (156 aa).

S-adenosyl-L-methionine is bound by residues Leu73, Gly104, and 123 to 128; that span reads LSPLTL.

This sequence belongs to the RNA methyltransferase RlmH family. As to quaternary structure, homodimer.

It localises to the cytoplasm. It catalyses the reaction pseudouridine(1915) in 23S rRNA + S-adenosyl-L-methionine = N(3)-methylpseudouridine(1915) in 23S rRNA + S-adenosyl-L-homocysteine + H(+). Specifically methylates the pseudouridine at position 1915 (m3Psi1915) in 23S rRNA. This is Ribosomal RNA large subunit methyltransferase H from Aliivibrio fischeri (strain ATCC 700601 / ES114) (Vibrio fischeri).